Reading from the N-terminus, the 433-residue chain is Peptidoglycan glycosyltransferase RodA (433 aa).

The next 12 helical transmembrane spans lie at 9-29 (FDYL…LFIY), 44-64 (YLKQ…VSMY), 74-94 (TLIF…GRYV), 100-120 (WIGV…AYIL), 158-178 (LGTA…AGFP), 181-201 (LIFA…LPLW), 221-241 (LSLF…VGYL), 249-269 (YWIT…LLGV), 295-315 (WHII…MGYL), 341-361 (WGFV…LHTL), 378-398 (GVLG…MGIM), and 400-420 (ITGI…TAMI).

It belongs to the SEDS family. MrdB/RodA subfamily.

The protein localises to the cell inner membrane. It catalyses the reaction [GlcNAc-(1-&gt;4)-Mur2Ac(oyl-L-Ala-gamma-D-Glu-L-Lys-D-Ala-D-Ala)](n)-di-trans,octa-cis-undecaprenyl diphosphate + beta-D-GlcNAc-(1-&gt;4)-Mur2Ac(oyl-L-Ala-gamma-D-Glu-L-Lys-D-Ala-D-Ala)-di-trans,octa-cis-undecaprenyl diphosphate = [GlcNAc-(1-&gt;4)-Mur2Ac(oyl-L-Ala-gamma-D-Glu-L-Lys-D-Ala-D-Ala)](n+1)-di-trans,octa-cis-undecaprenyl diphosphate + di-trans,octa-cis-undecaprenyl diphosphate + H(+). It functions in the pathway cell wall biogenesis; peptidoglycan biosynthesis. Peptidoglycan polymerase that is essential for cell wall elongation. This Treponema pallidum (strain Nichols) protein is Peptidoglycan glycosyltransferase RodA.